Consider the following 327-residue polypeptide: Malate dehydrogenase (327 aa).

Residue 11 to 17 participates in NAD(+) binding; the sequence is GAAGNIS. Residues Arg92 and Arg98 each coordinate substrate. NAD(+) is bound by residues Asn105, Gln112, and 129-131; that span reads VGN. Positions 131 and 162 each coordinate substrate. Catalysis depends on His187, which acts as the Proton acceptor. The disordered stretch occupies residues 304-327; that stretch reads SQEKMKATEQELSEERDAVEHLLP.

This sequence belongs to the LDH/MDH superfamily. MDH type 2 family.

The enzyme catalyses (S)-malate + NAD(+) = oxaloacetate + NADH + H(+). In terms of biological role, catalyzes the reversible oxidation of malate to oxaloacetate. The chain is Malate dehydrogenase from Psychrobacter sp. (strain PRwf-1).